The following is a 510-amino-acid chain: Beta-glucosidase 12 (510 aa).

Residues 1–24 (MAAAGAMPGGLLLTFLLLAVVASG) form the signal peptide. Gln-53 serves as a coordination point for a beta-D-glucoside. The N-linked (GlcNAc...) asparagine glycan is linked to Asn-122. Residues His-157 and 202 to 203 (NE) contribute to the a beta-D-glucoside site. Glu-203 functions as the Proton donor in the catalytic mechanism. 2 disulfide bridges follow: Cys-208–Cys-243 and Cys-222–Cys-230. N-linked (GlcNAc...) asparagine glycosylation occurs at Asn-229. Tyr-346 contacts a beta-D-glucoside. Residues Asn-361 and Asn-371 are each glycosylated (N-linked (GlcNAc...) asparagine). Glu-417 is a binding site for a beta-D-glucoside. The active-site Nucleophile is Glu-417. Asn-425 carries N-linked (GlcNAc...) asparagine glycosylation. Residues Trp-466, 473–474 (EW), and Phe-482 each bind a beta-D-glucoside.

Belongs to the glycosyl hydrolase 1 family.

It is found in the secreted. The enzyme catalyses Hydrolysis of terminal, non-reducing beta-D-glucosyl residues with release of beta-D-glucose.. Its function is as follows. Hydrolyzes p-nitrophenyl beta-D-glucoside, p-nitrophenyl beta-D-galactoside, p-nitrophenyl beta-D-xyloside, p-nitrophenyl beta-D-fucoside, p-nitrophenyl beta-L-arabinoside, cello-oligosaccharides and laminaribiose. The chain is Beta-glucosidase 12 from Oryza sativa subsp. indica (Rice).